A 542-amino-acid chain; its full sequence is MSTSLSAWQSLREHAAKIRHTHMRDWFTGPQGQARSVRLTVEACGLTLDYAKNRVTEDTLSLLFALARQARVCERRDAMFAGEPVNTTERRAALHMALRAHPGDGYRALGVPVEADVSAVLAQMERFARDVRSGSWTGFDGRAITDVVNIGIGGSDLGPRMVCRALEQDTEPGPRLHFVANVDGYDLARTLARLDAATTLVIVCSKTFTTLETMANARTARDWFLRHGVTHSDLARHFVAVSTNRDAVAAFGIDPVNMFPFWDWVGGRFSLWSAVGLSIAVAIGFDRFRQLLDGARAMDRHFAGAPPEQNLPMILGLLDVWYRSFLGTASRCVAPYCEPLDLLPAFLQQLEMESNGKSVQHDGAALEAGSAAVVWGTTGTNGQHAYFQMVHQGSQLVPVDFIACLQPHSDLPGHHTKLLANCFAQGEALLRGRTADEVRAEGKADEALVPHLVFEGNRPSNTLLLQRLDAFHLGALLAMSEHRTFVQGALWNINPFDQWGVELGKMLARPIERELEGAPPQPHDASTAALIRRAAQFCASTD.

Glu353 acts as the Proton donor in catalysis. Residues His384 and Lys505 contribute to the active site.

It belongs to the GPI family.

It localises to the cytoplasm. It catalyses the reaction alpha-D-glucose 6-phosphate = beta-D-fructose 6-phosphate. Its pathway is carbohydrate biosynthesis; gluconeogenesis. It participates in carbohydrate degradation; glycolysis; D-glyceraldehyde 3-phosphate and glycerone phosphate from D-glucose: step 2/4. Functionally, catalyzes the reversible isomerization of glucose-6-phosphate to fructose-6-phosphate. The polypeptide is Glucose-6-phosphate isomerase 2 (Cupriavidus pinatubonensis (strain JMP 134 / LMG 1197) (Cupriavidus necator (strain JMP 134))).